Reading from the N-terminus, the 611-residue chain is MSKIIGIDLGTTNSCVAVMEGGEPKVIPNPEGNRTTPSVVAFKNEERQVGEVAKRQAITNPNTIMSVKRHMGTDYKVEVEGKDYTPQEISAIILQNLKASAEAYLGETVTKAVITVPAYFNDAERQATKDAGRIAGLEVERIINEPTAAALAYGLEKQDEEQKILVYDLGGGTFDVSILELADGTFEVISTAGDNRLGGDDFDQVIIDHLVAEFKKENNIDLSQDKMALQRLKDAAEKAKKDLSGVTQTQISLPFISAGAAGPLHLELTLTRAKFEELSAGLVERTLEPTRRALKDAGFAPSELDKVILVGGSTRIPAVQEAIKRETGKEPYKGVNPDEVVALGAAVQGGVLTGDVEGVLLLDVTPLSLGIETMGGVFTKLIERNTTIPTSKSQVFSTAADNQPAVDIHVLQGERPMSADNKTLGRFQLTDLPPAPRGIPQIEVTFDIDANGIVNVRAKDLGTSKEQAITIQSSSGLSDEEVERMVQEAEANADADQKRKEEVELRNEADQLVFQTDKVVKDLEGKVDAAEVAKATEAKEALQAAIEKNELEEIRAKKDALQEIVQQLTVKLYEQAQAAAGQAEGAQGAQDAGAKKDNVVDAEFEEVKEDK.

Residue threonine 173 is modified to Phosphothreonine; by autocatalysis. Residues 579–592 show a composition bias toward low complexity; sequence AAGQAEGAQGAQDA. Residues 579 to 598 form a disordered region; sequence AAGQAEGAQGAQDAGAKKDN.

This sequence belongs to the heat shock protein 70 family.

Functionally, acts as a chaperone. In Bacillus cereus (strain B4264), this protein is Chaperone protein DnaK.